The chain runs to 297 residues: Probable GTP 3',8-cyclase (297 aa).

The 217-residue stretch at 4–220 (EFGREIRSFR…VVTRKFMQNR (217 aa)) folds into the Radical SAM core domain. Arg-13 serves as a coordination point for GTP. 2 residues coordinate [4Fe-4S] cluster: Cys-20 and Cys-24. Tyr-26 is an S-adenosyl-L-methionine binding site. Cys-27 provides a ligand contact to [4Fe-4S] cluster. Lys-61 contacts GTP. Gly-65 lines the S-adenosyl-L-methionine pocket. Thr-91 is a binding site for GTP. Ser-115 lines the S-adenosyl-L-methionine pocket. Position 151 (Lys-151) interacts with GTP. The [4Fe-4S] cluster site is built by Cys-242 and Cys-245. A GTP-binding site is contributed by 247 to 249 (RIR). Residue Cys-259 participates in [4Fe-4S] cluster binding.

The protein belongs to the radical SAM superfamily. MoaA family. [4Fe-4S] cluster is required as a cofactor.

It carries out the reaction GTP + AH2 + S-adenosyl-L-methionine = (8S)-3',8-cyclo-7,8-dihydroguanosine 5'-triphosphate + 5'-deoxyadenosine + L-methionine + A + H(+). It participates in cofactor biosynthesis; molybdopterin biosynthesis. Functionally, catalyzes the cyclization of GTP to (8S)-3',8-cyclo-7,8-dihydroguanosine 5'-triphosphate. The protein is Probable GTP 3',8-cyclase of Methanococcus vannielii (strain ATCC 35089 / DSM 1224 / JCM 13029 / OCM 148 / SB).